We begin with the raw amino-acid sequence, 498 residues long: N-acyl-D-aspartate deacylase (498 aa).

A disordered region spans residues 478–498 (AERPGQVLAPGDAIPWSQQSE).

The protein belongs to the metallo-dependent hydrolases superfamily. N-acyl-D-amino-acid deacylase family. Zn(2+) is required as a cofactor.

The protein localises to the cytoplasm. The catalysed reaction is an N-acyl-D-aspartate + H2O = D-aspartate + a carboxylate. The protein is N-acyl-D-aspartate deacylase of Alcaligenes xylosoxydans xylosoxydans (Achromobacter xylosoxidans).